We begin with the raw amino-acid sequence, 327 residues long: Phenylalanine--tRNA ligase alpha subunit (327 aa).

Residue Glu-252 coordinates Mg(2+).

This sequence belongs to the class-II aminoacyl-tRNA synthetase family. Phe-tRNA synthetase alpha subunit type 1 subfamily. In terms of assembly, tetramer of two alpha and two beta subunits. The cofactor is Mg(2+).

It is found in the cytoplasm. The catalysed reaction is tRNA(Phe) + L-phenylalanine + ATP = L-phenylalanyl-tRNA(Phe) + AMP + diphosphate + H(+). The protein is Phenylalanine--tRNA ligase alpha subunit of Shewanella putrefaciens (strain CN-32 / ATCC BAA-453).